The primary structure comprises 333 residues: Adenosine deaminase (333 aa).

Residues His12 and His14 each coordinate Zn(2+). Residues His14, Asp16, and Gly170 each coordinate substrate. His197 is a Zn(2+) binding site. The active-site Proton donor is the Glu200. Residue Asp278 participates in Zn(2+) binding. Asp279 contributes to the substrate binding site.

The protein belongs to the metallo-dependent hydrolases superfamily. Adenosine and AMP deaminases family. Adenosine deaminase subfamily. Zn(2+) is required as a cofactor.

The enzyme catalyses adenosine + H2O + H(+) = inosine + NH4(+). The catalysed reaction is 2'-deoxyadenosine + H2O + H(+) = 2'-deoxyinosine + NH4(+). In terms of biological role, catalyzes the hydrolytic deamination of adenosine and 2-deoxyadenosine. The chain is Adenosine deaminase from Shigella sonnei (strain Ss046).